The primary structure comprises 599 residues: Elongation factor 4 (599 aa).

A tr-type G domain is found at 4-186 (KYIRNFSIIA…AIVEKVPPPK (183 aa)). Residues 16–21 (DHGKST) and 133–136 (NKID) contribute to the GTP site.

Belongs to the TRAFAC class translation factor GTPase superfamily. Classic translation factor GTPase family. LepA subfamily.

Its subcellular location is the cell inner membrane. It catalyses the reaction GTP + H2O = GDP + phosphate + H(+). In terms of biological role, required for accurate and efficient protein synthesis under certain stress conditions. May act as a fidelity factor of the translation reaction, by catalyzing a one-codon backward translocation of tRNAs on improperly translocated ribosomes. Back-translocation proceeds from a post-translocation (POST) complex to a pre-translocation (PRE) complex, thus giving elongation factor G a second chance to translocate the tRNAs correctly. Binds to ribosomes in a GTP-dependent manner. The sequence is that of Elongation factor 4 from Bdellovibrio bacteriovorus (strain ATCC 15356 / DSM 50701 / NCIMB 9529 / HD100).